The following is a 163-amino-acid chain: Nucleotide-binding protein Acel_0286 (163 aa).

It belongs to the YajQ family.

In terms of biological role, nucleotide-binding protein. The sequence is that of Nucleotide-binding protein Acel_0286 from Acidothermus cellulolyticus (strain ATCC 43068 / DSM 8971 / 11B).